Here is a 574-residue protein sequence, read N- to C-terminus: 4-oxocyclohexanecarboxylate 2-dehydrogenase (574 aa).

It belongs to the FAD-dependent oxidoreductase 2 family. In terms of assembly, monomer. Homodimer. The cofactor is FAD.

It catalyses the reaction 4-oxocyclohexane-1-carboxylate + O2 = 4-oxocyclohex-2-ene-1-carboxylate + H2O2. Its activity is regulated as follows. Inhibited by 5,5'-dithio-bis(2- nitrobenzoate) and N-bromosuccinimide, but not by thiol and chelating reagents. Functionally, desaturase involved in a cyclohexanecarboxylate (CHCA) degradation pathway. Catalyzes the conversion of 4-oxocyclohexanecarboxylate (4-oxoCHCA) to 4-oxocyclohexenecarboxylate. Is highly specific for 4-oxocyclohexanecarboxylic acid and shows only slight activity with 4-oxo-2-methylcyclohex-2-enecarboxylic acid. The protein is 4-oxocyclohexanecarboxylate 2-dehydrogenase of Sinomonas cyclohexanicum (Corynebacterium cyclohexanicum).